A 206-amino-acid polypeptide reads, in one-letter code: Uridine kinase (206 aa).

9–16 (GGSGSGKT) contacts ATP.

Belongs to the uridine kinase family.

It localises to the cytoplasm. The catalysed reaction is uridine + ATP = UMP + ADP + H(+). The enzyme catalyses cytidine + ATP = CMP + ADP + H(+). It participates in pyrimidine metabolism; CTP biosynthesis via salvage pathway; CTP from cytidine: step 1/3. The protein operates within pyrimidine metabolism; UMP biosynthesis via salvage pathway; UMP from uridine: step 1/1. In Borrelia duttonii (strain Ly), this protein is Uridine kinase.